The sequence spans 499 residues: Lysine--tRNA ligase (499 aa).

The Mg(2+) site is built by glutamate 408 and glutamate 415.

The protein belongs to the class-II aminoacyl-tRNA synthetase family. In terms of assembly, homodimer. Requires Mg(2+) as cofactor.

It localises to the cytoplasm. The enzyme catalyses tRNA(Lys) + L-lysine + ATP = L-lysyl-tRNA(Lys) + AMP + diphosphate. This chain is Lysine--tRNA ligase, found in Agrobacterium fabrum (strain C58 / ATCC 33970) (Agrobacterium tumefaciens (strain C58)).